The chain runs to 184 residues: Structural protein V8 (184 aa).

The tract at residues 14–35 is disordered; sequence IYNKSNTLTNTPSNPTGNTNTL.

This sequence belongs to the sputnik virus V6 family.

The protein localises to the virion. This chain is Structural protein V8, found in Sputnik virophage.